A 250-amino-acid chain; its full sequence is 23S rRNA (guanosine-2'-O-)-methyltransferase RlmB (250 aa).

S-adenosyl-L-methionine is bound by residues glycine 197, isoleucine 217, and methionine 226.

It belongs to the class IV-like SAM-binding methyltransferase superfamily. RNA methyltransferase TrmH family. RlmB subfamily.

The protein localises to the cytoplasm. It carries out the reaction guanosine(2251) in 23S rRNA + S-adenosyl-L-methionine = 2'-O-methylguanosine(2251) in 23S rRNA + S-adenosyl-L-homocysteine + H(+). Its function is as follows. Specifically methylates the ribose of guanosine 2251 in 23S rRNA. In Neisseria meningitidis serogroup B (strain ATCC BAA-335 / MC58), this protein is 23S rRNA (guanosine-2'-O-)-methyltransferase RlmB.